Here is a 556-residue protein sequence, read N- to C-terminus: Bifunctional methyltransferase (556 aa).

The RF MTase stretch occupies residues 1 to 310 (MQYSIQKFLN…NRVIEISLIQ (310 aa)). Residues 148–152 (GTGSG), Asp171, Trp200, and Asn215 each bind S-adenosyl-L-methionine. 215 to 218 (NPPY) is a substrate binding site. The segment at 313-556 (RSYARRIGKS…IITKIPPKSY (244 aa)) is tRNA MTase. An insert region spans residues 348 to 399 (KNYNSCKIKSNYTKFNLEKSKESVSRGAERIKIREHLRTYKEDVANFSSSTS). The S-adenosyl-L-methionine site is built by Glu403, Glu428, Asn455, and Asp477. Asp477 is an active-site residue. Substrate contacts are provided by Lys481 and Asp513.

The protein in the C-terminal section; belongs to the class I-like SAM-binding methyltransferase superfamily. TrmB family. It in the N-terminal section; belongs to the protein N5-glutamine methyltransferase family. PrmC subfamily.

It carries out the reaction L-glutaminyl-[peptide chain release factor] + S-adenosyl-L-methionine = N(5)-methyl-L-glutaminyl-[peptide chain release factor] + S-adenosyl-L-homocysteine + H(+). The catalysed reaction is guanosine(46) in tRNA + S-adenosyl-L-methionine = N(7)-methylguanosine(46) in tRNA + S-adenosyl-L-homocysteine. Methylates the class 1 translation termination release factors RF1/PrfA and RF2/PrfB on the glutamine residue of the universally conserved GGQ motif. Functionally, catalyzes the formation of N(7)-methylguanine at position 46 (m7G46) in tRNA. The chain is Bifunctional methyltransferase (prmC/trmB) from Rickettsia bellii (strain RML369-C).